A 77-amino-acid chain; its full sequence is Large ribosomal subunit protein uL29 (77 aa).

This sequence belongs to the universal ribosomal protein uL29 family.

This Corynebacterium urealyticum (strain ATCC 43042 / DSM 7109) protein is Large ribosomal subunit protein uL29.